The primary structure comprises 277 residues: MLIYPPIDPVALQIGPLAIHWYGLSYLAAFGLFMLLGCRRLRHPPFAGRTGPGAWSRKDVEDILFLGVAGVVLGGRLGYCLFYKPDYYLGHPLEVFALWQGGMAFHGGLLGVIVAMLWFAHSRQRPLLQVADFVAPCVPTGLAAGRVGNFINGELWGRFASPDLPWGMVFAHSGSMQPRHPSQVYQFLLEGLLLFVLLWLYARRERRQGQVAAAFLVGYGVLRFIAEQFREPDAFLGILALGMSMGQWLCLPMIAGGVLLWCRAARRRPAVARGSRA.

3 helical membrane-spanning segments follow: residues 17 to 37, 63 to 83, and 101 to 121; these read LAIH…MLLG, ILFL…CLFY, and GGMA…WFAH. R146 lines the a 1,2-diacyl-sn-glycero-3-phospho-(1'-sn-glycerol) pocket. 3 helical membrane-spanning segments follow: residues 182 to 202, 209 to 229, and 234 to 254; these read SQVY…WLYA, GQVA…AEQF, and AFLG…LPMI.

It belongs to the Lgt family.

Its subcellular location is the cell inner membrane. The enzyme catalyses L-cysteinyl-[prolipoprotein] + a 1,2-diacyl-sn-glycero-3-phospho-(1'-sn-glycerol) = an S-1,2-diacyl-sn-glyceryl-L-cysteinyl-[prolipoprotein] + sn-glycerol 1-phosphate + H(+). It participates in protein modification; lipoprotein biosynthesis (diacylglyceryl transfer). Catalyzes the transfer of the diacylglyceryl group from phosphatidylglycerol to the sulfhydryl group of the N-terminal cysteine of a prolipoprotein, the first step in the formation of mature lipoproteins. This is Phosphatidylglycerol--prolipoprotein diacylglyceryl transferase from Verminephrobacter eiseniae (strain EF01-2).